Consider the following 83-residue polypeptide: Keratin-associated protein 21-2 (83 aa).

Interacts with hair keratins.

Functionally, in the hair cortex, hair keratin intermediate filaments are embedded in an interfilamentous matrix, consisting of hair keratin-associated proteins (KRTAP), which are essential for the formation of a rigid and resistant hair shaft through their extensive disulfide bond cross-linking with abundant cysteine residues of hair keratins. The matrix proteins include the high-sulfur and high-glycine-tyrosine keratins. The sequence is that of Keratin-associated protein 21-2 (KRTAP21-2) from Homo sapiens (Human).